Here is a 626-residue protein sequence, read N- to C-terminus: MNVEVVKVMPQDLVTFKDVAIDFSQEEWQWMNPAQKRLYRSMMLENYQSLVSLGLCISKPYVISLLEQGREPWEMTSEMTRSPFSDWESIYVTQELPLKQFMYDDACMEGITSYGLECSTFEENWKWEDLFEKQMGSHEMFSKKEIITHKETITKETEFKYTKFGKCIHLENIEESIYNHTSDKKSFSKNSMVIKHKKVYVGKKLFKCNECDKTFTHSSSLTVHFRIHTGEKPYACEECGKAFKQRQHLAQHHRTHTGEKLFECKECRKAFKQSEHLIQHQRIHTGEKPYKCKECRKAFRQPAHLAQHQRIHTGEKPYECKECGKAFSDGSSFARHQRCHTGKRPYECIECGKAFRYNTSFIRHWRSYHTGEKPFNCIDCGKAFSVHIGLILHRRIHTGEKPYKCGVCGKTFSSGSSRTVHQRIHTGEKPYECDICGKDFSHHASLTQHQRVHSGEKPYECKECGKAFRQNVHLVSHLRIHTGEKPYECKECGKAFRISSQLATHQRIHTGEKPYECIECGNAFKQRSHLAQHQKTHTGEKPYECNECGKAFSQTSNLTQHQRIHTGEKPYKCTECGKAFSDSSSCAQHQRLHTGQRPYQCFECGKAFRRKLSLICHQRSHTGEEP.

One can recognise a KRAB domain in the interval 14 to 85 (VTFKDVAIDF…TSEMTRSPFS (72 aa)). 15 consecutive C2H2-type zinc fingers follow at residues 206–228 (FKCN…FRIH), 234–256 (YACE…HRTH), 262–284 (FECK…QRIH), 290–312 (YKCK…QRIH), 318–340 (YECK…QRCH), 346–369 (YECI…RSYH), 375–397 (FNCI…RRIH), 403–425 (YKCG…QRIH), 431–453 (YECD…QRVH), 459–481 (YECK…LRIH), 487–509 (YECK…QRIH), 515–537 (YECI…QKTH), 543–565 (YECN…QRIH), 571–593 (YKCT…QRLH), and 599–621 (YQCF…QRSH).

The protein belongs to the krueppel C2H2-type zinc-finger protein family.

Its subcellular location is the nucleus. Functionally, may be involved in transcriptional regulation. The polypeptide is Zinc finger protein 471 (ZNF471) (Homo sapiens (Human)).